The sequence spans 533 residues: Beta-xylosidase (533 aa).

The active-site Proton acceptor is D14. The active-site Proton donor is the E186.

The protein belongs to the glycosyl hydrolase 43 family. In terms of assembly, homodimer.

It is found in the cell membrane. The enzyme catalyses Hydrolysis of (1-&gt;4)-beta-D-xylans, to remove successive D-xylose residues from the non-reducing termini.. The protein is Beta-xylosidase (xynB) of Bacillus subtilis (strain 168).